Consider the following 334-residue polypeptide: Tetraacyldisaccharide 4'-kinase (334 aa).

60 to 67 serves as a coordination point for ATP; sequence TVGGTGKT.

It belongs to the LpxK family.

The enzyme catalyses a lipid A disaccharide + ATP = a lipid IVA + ADP + H(+). The protein operates within glycolipid biosynthesis; lipid IV(A) biosynthesis; lipid IV(A) from (3R)-3-hydroxytetradecanoyl-[acyl-carrier-protein] and UDP-N-acetyl-alpha-D-glucosamine: step 6/6. Functionally, transfers the gamma-phosphate of ATP to the 4'-position of a tetraacyldisaccharide 1-phosphate intermediate (termed DS-1-P) to form tetraacyldisaccharide 1,4'-bis-phosphate (lipid IVA). The chain is Tetraacyldisaccharide 4'-kinase from Stutzerimonas stutzeri (strain A1501) (Pseudomonas stutzeri).